The following is a 535-amino-acid chain: Beta-hexosaminidase 3 (535 aa).

A signal peptide spans 1–24 (MRGSGAKIAGVLPLFMLFIAGTIS). Asn92 is a glycosylation site (N-linked (GlcNAc...) asparagine). A disulfide bond links Cys292 and Cys334. Residue Glu329 is the Proton donor of the active site. Asn331, Asn405, Asn441, and Asn496 each carry an N-linked (GlcNAc...) asparagine glycan. A disulfide bridge connects residues Cys506 and Cys532.

It belongs to the glycosyl hydrolase 20 family. In terms of processing, N-glycosylated. In terms of tissue distribution, expressed in roots, leaves, stems, flowers and siliques.

It is found in the cell membrane. The enzyme catalyses Hydrolysis of terminal non-reducing N-acetyl-D-hexosamine residues in N-acetyl-beta-D-hexosaminides.. With respect to regulation, slightly inhibited by N-acetylcastanospermine. Functionally, has a broad substrate specificity. Can use synthetic substrates such as pyridylaminated chitotriose, p-nitrophenyl-beta-N-acetylglucosaminide, p-nitrophenyl-2-acetamido-2-deoxy-beta-D-glucopyranoside (pNP-GlcNAc), p-nitrophenyl-2-acetamido-2-deoxy-beta-D-galactopyranoside (pNP-GalNAc), 4-methylumbelliferyl-2-acetamido-2-deoxy-beta-D-glucopyranoside (MU-GlcNAc), and 4-methylumbelliferyl-6-sulfo-2-acetamido-2-deoxy-beta-D-glucopyranoside (MU-GlcNAc-6SO(4)) as substrates. Removes terminal GlcNAc residues from alpha1,3- and alpha1,6-mannosyl branches of biantennary N-glycans without any strict branch preference. Required for the presence of paucimannosidic N-glycans in glycoproteins of roots and leaves. This is Beta-hexosaminidase 3 (HEXO3) from Arabidopsis thaliana (Mouse-ear cress).